The sequence spans 1084 residues: Probable hemoglobin and hemoglobin-haptoglobin-binding protein 3 (1084 aa).

The first 24 residues, 1 to 24 (MTNFKFSLLACSIAFALNASTVYA), serve as a signal peptide directing secretion. Repeat copies occupy residues 26–29 (QPTN), 30–33 (QPTN), 34–37 (QPTN), 38–41 (QPTN), 42–45 (QPTN), 46–49 (QPTN), 50–53 (QPTN), 54–57 (QPTN), 58–61 (QPTN), 62–65 (QPTN), 66–69 (QPTN), and 70–73 (QPTN). A 12 X 4 AA tandem repeats of Q-P-T-N region spans residues 26–73 (QPTNQPTNQPTNQPTNQPTNQPTNQPTNQPTNQPTNQPTNQPTNQPTN). A compositionally biased stretch (low complexity) spans 26-75 (QPTNQPTNQPTNQPTNQPTNQPTNQPTNQPTNQPTNQPTNQPTNQPTNQN). The segment at 26–77 (QPTNQPTNQPTNQPTNQPTNQPTNQPTNQPTNQPTNQPTNQPTNQPTNQNSN) is disordered. The TonB box signature appears at 83–90 (EQINVSGS). The 126-residue stretch at 95-220 (NIKEKKVGET…LGGSVIFETK (126 aa)) folds into the TBDR plug domain. The 857-residue stretch at 228 to 1084 (DKDYYLSYKR…NYRMSVQFEF (857 aa)) folds into the TBDR beta-barrel domain. The TonB C-terminal box motif lies at 1067–1084 (NRFYAPGRNYRMSVQFEF).

The protein belongs to the TonB-dependent receptor family. Hemoglobin/haptoglobin binding protein subfamily.

It is found in the cell outer membrane. In terms of biological role, acts as a receptor for hemoglobin or the hemoglobin/haptoglobin complex of the human host and is required for heme uptake. This chain is Probable hemoglobin and hemoglobin-haptoglobin-binding protein 3, found in Haemophilus influenzae (strain ATCC 51907 / DSM 11121 / KW20 / Rd).